The chain runs to 185 residues: Elongation factor P 1 (185 aa).

It belongs to the elongation factor P family.

Its subcellular location is the cytoplasm. The protein operates within protein biosynthesis; polypeptide chain elongation. In terms of biological role, involved in peptide bond synthesis. Stimulates efficient translation and peptide-bond synthesis on native or reconstituted 70S ribosomes in vitro. Probably functions indirectly by altering the affinity of the ribosome for aminoacyl-tRNA, thus increasing their reactivity as acceptors for peptidyl transferase. The polypeptide is Elongation factor P 1 (efp1) (Chlamydia muridarum (strain MoPn / Nigg)).